A 179-amino-acid polypeptide reads, in one-letter code: MIP18 family protein C144.16 (179 aa).

The segment at 1 to 26 is disordered; sequence MSANLQNENPEVKELNQLPSRVEEEE.

It belongs to the MIP18 family.

In terms of biological role, may play a role in chromosome segregation through establishment of sister chromatid cohesion. In Schizosaccharomyces pombe (strain 972 / ATCC 24843) (Fission yeast), this protein is MIP18 family protein C144.16.